A 330-amino-acid polypeptide reads, in one-letter code: Mycothiol acetyltransferase (330 aa).

2 consecutive N-acetyltransferase domains span residues 5 to 142 (LVTD…MPLR) and 171 to 328 (VRLR…APRP). Glu-36 contributes to the 1D-myo-inositol 2-(L-cysteinylamino)-2-deoxy-alpha-D-glucopyranoside binding site. Acetyl-CoA is bound at residue 80-82 (VVV). The tract at residues 142-161 (RDIAGDEPGGPWEAPELPEP) is disordered. Positions 198, 238, and 254 each coordinate 1D-myo-inositol 2-(L-cysteinylamino)-2-deoxy-alpha-D-glucopyranoside. Residues 258 to 260 (VGV) and 265 to 271 (QGSGLGR) each bind acetyl-CoA. 1D-myo-inositol 2-(L-cysteinylamino)-2-deoxy-alpha-D-glucopyranoside is bound at residue Tyr-292. 297–302 (NEAAVR) is a binding site for acetyl-CoA.

It belongs to the acetyltransferase family. MshD subfamily. Monomer.

It catalyses the reaction 1D-myo-inositol 2-(L-cysteinylamino)-2-deoxy-alpha-D-glucopyranoside + acetyl-CoA = mycothiol + CoA + H(+). Catalyzes the transfer of acetyl from acetyl-CoA to desacetylmycothiol (Cys-GlcN-Ins) to form mycothiol. This Nocardiopsis dassonvillei (strain ATCC 23218 / DSM 43111 / CIP 107115 / JCM 7437 / KCTC 9190 / NBRC 14626 / NCTC 10488 / NRRL B-5397 / IMRU 509) (Actinomadura dassonvillei) protein is Mycothiol acetyltransferase.